A 267-amino-acid chain; its full sequence is GTP cyclohydrolase MptA (267 aa).

It belongs to the GTP cyclohydrolase IV family. In terms of assembly, homodimer. It depends on Fe(2+) as a cofactor.

It catalyses the reaction GTP + H2O = 7,8-dihydroneopterin 2',3'-cyclic phosphate + formate + diphosphate + H(+). Its pathway is cofactor biosynthesis; 5,6,7,8-tetrahydromethanopterin biosynthesis. Functionally, converts GTP to 7,8-dihydro-D-neopterin 2',3'-cyclic phosphate, the first intermediate in the biosynthesis of coenzyme methanopterin. The sequence is that of GTP cyclohydrolase MptA from Thermococcus kodakarensis (strain ATCC BAA-918 / JCM 12380 / KOD1) (Pyrococcus kodakaraensis (strain KOD1)).